The sequence spans 339 residues: Pleckstrin homology domain protein opy1 (339 aa).

Residues 25-119 (RVLKSGWLIK…WVHVLRSTTG (95 aa)) enclose the PH 1 domain. Over residues 141–167 (ESEPNVQISDTDFDNISTEPRNQTTSP) the composition is skewed to polar residues. The interval 141–170 (ESEPNVQISDTDFDNISTEPRNQTTSPLDL) is disordered. The 98-residue stretch at 233–330 (KVLMQGTIHW…WVAALKTSID (98 aa)) folds into the PH 2 domain.

As to quaternary structure, interacts (via domain PH 1) with phosphatidylinositol 4-phosphate 5-kinase its3; the interaction is direct but opy1 does not appear to regulate its3 localization or function.

The protein localises to the cell tip. Its subcellular location is the cell membrane. Its function is as follows. Binds phosphatidylinositol 4,5-bisphosphate (PtdIns(4,5)P2/PIP2) at the cell membrane. The polypeptide is Pleckstrin homology domain protein opy1 (Schizosaccharomyces pombe (strain 972 / ATCC 24843) (Fission yeast)).